A 646-amino-acid chain; its full sequence is MKPTLYTATGECVTPGRELGKGGEGAVYDINEFVDSVAKIYHTPPPALKQDKLAFMAATADAQLLNYVAWPQATLHGGRGGKVIGFMMPKVSGKEPIHMIYSPAHRRQSYPHCAWDFLLYVARNIASSFATVHEHGHVVGDVNQNSFMVGRDSKVVLIDSDSFQINANGTLHLCEVGVSHFTPPELQTLPSFVGFERTANHDNFGLALLIFHVLFGGRHPYSGVPLISDAGNALETDIAHFRYAYASDNQRRGLKPPPRSIPLSMLPGDVEAMFQQAFTESGVATARPTAKAWVAALDLLRQQLKKCTVSAMHVYPGHLTDCPWCALDNQGVIYFIDLGEEVITTSGDFVLAKVWAMVMASVAPPALQLPLPDHFQPTGRPLPLGLLRREYIILIEIALSALSLLLCGLQAEPRYIILVPVLAAIWIIGSLTSKVYKAEIQQRREAFNRAKMDYDHLVSQIQQLGGLEGFIAKRAMLEKMKDEILGLPEEEKRALAALHDTARERQKQKFLEGFFIDAASIPGVGPARKAALRSFGIETAADVTRRGVKQVKGFGDHLTQAVIDWKASCERRFVFRPNEAVTPAERQAVMAKMAAKRHRLESALTVGATELQRFRLHAPARTMPLMEPLRQAAEKLAQAQADLSRC.

The region spanning 13–300 is the Protein kinase domain; it reads VTPGRELGKG…KAWVAALDLL (288 aa). ATP is bound by residues 19–27 and lysine 39; that span reads LGKGGEGAV. Aspartate 141 functions as the Proton acceptor in the catalytic mechanism.

In terms of processing, autophosphorylated.

Its function is as follows. Probable serine/threonine kinase. This Escherichia coli O157:H7 protein is Protein kinase YegI (yegI).